The chain runs to 432 residues: MESSSECSSISDFQDSTEGDDANTLPENLCMREYVVICDYVATDNTQLSLCSGDKVLLLNAVSQDWWWVNHNGTCGYVPASHLHDALNEQEDTEVNDPWQDEEYYGSYKTLKLHLEMLSDVPRTMTYQNVILKNSSSLCGKHILDLGCGTGIISFFCAKFAQPEAVYAVEASKIAEQTCRLVEQNGISSLVHVIRQQAEELDLPTKVDVLVSEWMGTCLLFEFMLESVLQARDRWLKEDGVMWPSTACIHLVPCSAYKEYSNKVLFWDNPYQLDFSLLKPPATKEFFAKPQPDYILQPEDCLSEPCTLFHLNLKTLQVAELERMNCDFTFLVHTNGLLHGFTAWFSVQFENLEEQGHLELNTGPFSPLTHWKHTLFMLDEPLQVQKRDKISGSVVFERNSVWRRHMSVTLSWVISRELKMQKVGCKVFPIWR.

Low complexity predominate over residues 1 to 11 (MESSSECSSIS). The interval 1-22 (MESSSECSSISDFQDSTEGDDA) is disordered. Positions 29–88 (LCMREYVVICDYVATDNTQLSLCSGDKVLLLNAVSQDWWWVNHNGTCGYVPASHLHDALN) constitute an SH3 domain. The region spanning 101 to 405 (DEEYYGSYKT…FERNSVWRRH (305 aa)) is the SAM-dependent MTase PRMT-type domain. Positions 114, 123, 147, 170, and 199 each coordinate S-adenosyl-L-methionine. Active-site residues include E213 and E222.

Belongs to the class I-like SAM-binding methyltransferase superfamily. Protein arginine N-methyltransferase family. In terms of assembly, interacts with ctnnb1.

Its subcellular location is the cytoplasm. It localises to the nucleus. It catalyses the reaction L-arginyl-[protein] + 2 S-adenosyl-L-methionine = N(omega),N(omega)-dimethyl-L-arginyl-[protein] + 2 S-adenosyl-L-homocysteine + 2 H(+). Arginine methyltransferase that methylates the guanidino nitrogens of arginyl residues in proteins such as histones. Involved in growth regulation. Involved in embryonic dorsal development. This is Protein arginine N-methyltransferase 2 (prmt2) from Xenopus laevis (African clawed frog).